A 352-amino-acid chain; its full sequence is N-lysine methyltransferase KMT5A (352 aa).

The interval 21-51 (AVAATAPGPEMVERRGPGRPRTNGENVFTGQ) is disordered. S59 is modified (phosphoserine). The tract at residues 87–202 (PLAGIYRKRD…KSKAELQSEE (116 aa)) is disordered. Residues 109-121 (MKAEEQKIKDARR) are compositionally biased toward basic and acidic residues. Residue T140 is modified to Phosphothreonine. Basic residues predominate over residues 156 to 172 (GLKKPVRGKQAPRKKAQ). Positions 216–337 (EGMKIDLIDG…AGEELLYDYG (122 aa)) constitute an SET domain. S-adenosyl-L-methionine-binding positions include 226-228 (KGR), Y271, and 298-299 (NH).

The protein belongs to the class V-like SAM-binding methyltransferase superfamily. Histone-lysine methyltransferase family. PR/SET subfamily. In terms of assembly, interacts with L3MBTL1. Interacts with SIRT2 (phosphorylated form); the interaction is direct, stimulates KMT5A-mediated methyltransferase activity at histone H4 'Lys-20' (H4K20me1) and is increased in a H(2)O(2)-induced oxidative stress-dependent manner. In terms of processing, ubiquitinated and degraded by the DCX(DTL) complex.

Its subcellular location is the nucleus. It is found in the chromosome. The enzyme catalyses L-lysyl(20)-[histone H4] + S-adenosyl-L-methionine = N(6)-methyl-L-lysyl(20)-[histone H4] + S-adenosyl-L-homocysteine + H(+). It carries out the reaction L-lysyl-[protein] + S-adenosyl-L-methionine = N(6)-methyl-L-lysyl-[protein] + S-adenosyl-L-homocysteine + H(+). Protein-lysine N-methyltransferase that monomethylates both histones and non-histone proteins. Specifically monomethylates 'Lys-20' of histone H4 (H4K20me1). H4K20me1 is enriched during mitosis and represents a specific tag for epigenetic transcriptional repression. Mainly functions in euchromatin regions, thereby playing a central role in the silencing of euchromatic genes. Required for cell proliferation, probably by contributing to the maintenance of proper higher-order structure of DNA during mitosis. Involved in chromosome condensation and proper cytokinesis. Nucleosomes are preferred as substrate compared to free histones. Mediates monomethylation of p53/TP53 at 'Lys-382', leading to repress p53/TP53-target genes. Plays a negative role in TGF-beta response regulation and a positive role in cell migration. The chain is N-lysine methyltransferase KMT5A from Bos taurus (Bovine).